A 314-amino-acid chain; its full sequence is Acetaldehyde dehydrogenase 2 (314 aa).

11–14 is a binding site for NAD(+); the sequence is SGNI. Cys129 (acyl-thioester intermediate) is an active-site residue. Residues 160 to 168 and Asn291 each bind NAD(+); that span reads SAGPGTRAN.

Belongs to the acetaldehyde dehydrogenase family.

It carries out the reaction acetaldehyde + NAD(+) + CoA = acetyl-CoA + NADH + H(+). This is Acetaldehyde dehydrogenase 2 from Rhodococcus erythropolis (strain PR4 / NBRC 100887).